A 292-amino-acid polypeptide reads, in one-letter code: ABC transporter ATP-binding protein YtrB (292 aa).

An ABC transporter domain is found at 2-227; the sequence is IELRQLSKAI…YIKIQMAFDT (226 aa). 34-41 contacts ATP; it reads GRNGSGKT.

The protein belongs to the ABC transporter superfamily. The complex is composed of 2 ATP-binding proteins (YtrB and YtrE), 2 transmembrane proteins (YtrC and YtrD) and a solute-binding protein (YtrF).

The protein localises to the cell membrane. Part of the ABC transporter complex YtrBCDEF that plays a role in acetoin utilization during stationary phase and sporulation. The polypeptide is ABC transporter ATP-binding protein YtrB (ytrB) (Bacillus subtilis (strain 168)).